The sequence spans 758 residues: Actin filament-associated protein 1-like 1 (758 aa).

A disordered region spans residues 91-194; it reads YRDSSENLSC…YESYDEEDEE (104 aa). Residues 102 to 120 are compositionally biased toward pro residues; that stretch reads LPPPPSAPPPPLPTTPPPE. Polar residues predominate over residues 137-148; the sequence is YITSRNSSSPPN. Residues 177-186 show a composition bias toward low complexity; the sequence is ESDGLSSSYE. The PH 1 domain occupies 216 to 312; sequence DSRICAFLLR…WLRVIKEVIS (97 aa). The disordered stretch occupies residues 335 to 369; sequence SHDKTSDSDSAANGENSSLSSGKENRDTGKCRKGG. Polar residues predominate over residues 342–356; the sequence is SDSAANGENSSLSSG. The PH 2 domain occupies 409 to 503; it reads EVPCCGYLSV…WLGLLLAQTG (95 aa). Positions 602–690 form a coiled coil; that stretch reads KTRAEEDARK…TEVKENLKKS (89 aa). The disordered stretch occupies residues 692–758; it reads AGGPTLGLAV…KAKEWEKKKP (67 aa). Residues 749 to 758 are compositionally biased toward basic and acidic residues; sequence KAKEWEKKKP.

Its subcellular location is the cytoplasm. The protein resides in the cell projection. It is found in the podosome. It localises to the invadopodium. The protein localises to the cytoskeleton. Its subcellular location is the stress fiber. May be involved in podosome and invadosome formation. This chain is Actin filament-associated protein 1-like 1 (afap1l1), found in Xenopus tropicalis (Western clawed frog).